The sequence spans 296 residues: Formamidopyrimidine-DNA glycosylase (296 aa).

P2 functions as the Schiff-base intermediate with DNA in the catalytic mechanism. The active-site Proton donor is E3. Catalysis depends on K58, which acts as the Proton donor; for beta-elimination activity. Positions 104, 126, and 169 each coordinate DNA. The FPG-type zinc-finger motif lies at 260–296 (SVYDRAGEACRKPGCDGTVTRIVQAGRSTFHCPRCQK). R286 functions as the Proton donor; for delta-elimination activity in the catalytic mechanism.

Belongs to the FPG family. As to quaternary structure, monomer. Zn(2+) is required as a cofactor.

It catalyses the reaction Hydrolysis of DNA containing ring-opened 7-methylguanine residues, releasing 2,6-diamino-4-hydroxy-5-(N-methyl)formamidopyrimidine.. The enzyme catalyses 2'-deoxyribonucleotide-(2'-deoxyribose 5'-phosphate)-2'-deoxyribonucleotide-DNA = a 3'-end 2'-deoxyribonucleotide-(2,3-dehydro-2,3-deoxyribose 5'-phosphate)-DNA + a 5'-end 5'-phospho-2'-deoxyribonucleoside-DNA + H(+). In terms of biological role, involved in base excision repair of DNA damaged by oxidation or by mutagenic agents. Acts as a DNA glycosylase that recognizes and removes damaged bases. Has a preference for oxidized purines, such as 7,8-dihydro-8-oxoguanine (8-oxoG). Has AP (apurinic/apyrimidinic) lyase activity and introduces nicks in the DNA strand. Cleaves the DNA backbone by beta-delta elimination to generate a single-strand break at the site of the removed base with both 3'- and 5'-phosphates. This chain is Formamidopyrimidine-DNA glycosylase, found in Sinorhizobium fredii (strain NBRC 101917 / NGR234).